A 139-amino-acid chain; its full sequence is Nucleoside diphosphate kinase (139 aa).

Positions 9, 57, 85, 91, 102, and 112 each coordinate ATP. The active-site Pros-phosphohistidine intermediate is His-115.

Belongs to the NDK family. In terms of assembly, homotetramer. Mg(2+) is required as a cofactor.

It is found in the cytoplasm. The enzyme catalyses a 2'-deoxyribonucleoside 5'-diphosphate + ATP = a 2'-deoxyribonucleoside 5'-triphosphate + ADP. The catalysed reaction is a ribonucleoside 5'-diphosphate + ATP = a ribonucleoside 5'-triphosphate + ADP. Its function is as follows. Major role in the synthesis of nucleoside triphosphates other than ATP. The ATP gamma phosphate is transferred to the NDP beta phosphate via a ping-pong mechanism, using a phosphorylated active-site intermediate. The sequence is that of Nucleoside diphosphate kinase from Neorickettsia sennetsu (strain ATCC VR-367 / Miyayama) (Ehrlichia sennetsu).